The following is a 641-amino-acid chain: MSDEGPGTGPGNGLGEKGDTSGPEGSGGSGPQRRGGDNHGRGRGRGRGRGGGRPGAPGGSGSGPRHRDGVRRPQKRPSCIGCKGTHGGTGAGAGAGGAGAGGAGAGGGAGAGGGAGGAGGAGGAGAGGGAGAGGGAGGAGGAGAGGGAGAGGGAGGAGAGGGAGGAGGAGAGGGAGAGGGAGGAGAGGGAGGAGGAGAGGGAGAGGAGGAGGAGAGGAGAGGGAGGAGGAGAGGAGAGGAGAGGAGAGGAGGAGAGGAGGAGAGGAGGAGAGGGAGGAGAGGGAGGAGAGGAGGAGAGGAGGAGAGGAGGAGAGGGAGAGGAGAGGGGRGRGGSGGRGRGGSGGRGRGGSGGRRGRGRERARGGSRERARGRGRGRGEKRPRSPSSQSSSSGSPPRRPPPGRRPFFHPVGEADYFEYHQEGGPDGEPDVPPGAIEQGPADDPGEGPSTGPRGQGDGGRRKKGGWFGKHRGQGGSNPKFENIAEGLRALLARSHVERTTDEGTWVAGVFVYGGSKTSLYNLRRGTALAIPQCRLTPLSRLPFGMAPGPGPQPGPLRESIVCYFMVFLQTHIFAEVLKDAIKDLVMTKPAPTCNIRVTVCSFDDGVDLPPWFPPMVEGAAAEGDDGDDGDEGGDGDEGEEGQE.

Residues 1–15 (MSDEGPGTGPGNGLG) are compositionally biased toward gly residues. Disordered stretches follow at residues 1 to 128 (MSDE…GAGG) and 224 to 478 (AGGA…NPKF). Positions 40–60 (GRGRGRGRGRGGGRPGAPGGS) are interaction with host C1QBP/P32. The chromosome-tethering GR1 stretch occupies residues 40 to 67 (GRGRGRGRGRGGGRPGAPGGSGSGPRHR). A compositionally biased stretch (basic residues) spans 41–50 (RGRGRGRGRG). Composition is skewed to gly residues over residues 51–62 (GGRPGAPGGSGS), 84–128 (GTHG…GAGG), and 224–352 (AGGA…GSGG). Positions 65–89 (RHRDGVRRPQKRPSCIGCKGTHGGT) are UR1. The GAr stretch occupies residues 90-325 (GAGAGAGGAG…GAGAGGAGAG (236 aa)). An interaction with host C1QBP/P32 region spans residues 325-376 (GGGGRGRGGSGGRGRGGSGGRGRGGSGGRRGRGRERARGGSRERARGRGRGR). The chromosome-tethering GR2 stretch occupies residues 328 to 378 (GRGRGGSGGRGRGGSGGRGRGGSGGRRGRGRERARGGSRERARGRGRGRGE). Residues 358–381 (RERARGGSRERARGRGRGRGEKRP) show a composition bias toward basic and acidic residues. The segment at 379-386 (KRPRSPSS) is nuclear localization signal. A compositionally biased stretch (low complexity) spans 383 to 394 (SPSSQSSSSGSP). A phosphoserine mark is found at serine 385 and serine 393. The segment at 387 to 395 (QSSSSGSPP) is interaction with host CSNK2B. The tract at residues 436–450 (QGPADDPGEGPSTGP) is interaction with host USP7. The interval 452–607 (GQGDGGRRKK…CSFDDGVDLP (156 aa)) is DBD/DD. Residues 458 to 470 (RRKKGGWFGKHRG) are compositionally biased toward basic residues. 3 residues coordinate DNA: lysine 460, lysine 461, and tyrosine 518. The active-site For site-specific DNA endonuclease activity is tyrosine 518. Residues 612-641 (PMVEGAAAEGDDGDDGDEGGDGDEGEEGQE) are disordered. Over residues 620–641 (EGDDGDDGDEGGDGDEGEEGQE) the composition is skewed to acidic residues.

The protein belongs to the herpesviridae EBNA1 family. In terms of assembly, homodimer. Dimers can assemble into higher-order oligomers like a homohexamer. Binding to the DS element involves 2 dimers of EBNA1. Interacts with human USP7; this interaction is independent and simultaneous to EBNA1 interaction with CSNK2B as well as necessary for PML nuclear bodies disruption by EBNA1. Interacts with host CSNK2B (via KSSR motif); the interaction requires phosphorylation of EBNA1, is independent and simultaneous to EBNA1 interaction with USP7 as well as necessary for PML nuclear bodies disruption by EBNA1. EBNA1, USP7 and CSNK2B form a ternary complex. EBNA1, USP7 and CSNK2B form a ternary complex. Interacts with human EBP2; it is not clear if this interaction is linked with the ability of EBNA1 to associate with host mitotic chromosomes. Interacts with BGLF4; this interaction facilitates the switch from latent to lytic DNA replication by down-regulating EBNA1 replication function. Interacts with human PAX5; this interaction promotes EBNA1-dependent transcription. Interacts with host KPNA1/Importin subunit alpha-5; this interaction allows the nuclear import of EBNA1. Interacts with host KPNA2/Importin subunit alpha-1; this interaction allows the nuclear import of EBNA1. Interacts with host C1QBP/P32. Interacts with host BIRC5/Survivin; this interaction is probably important for EBV episome maintenance in Burkitt's lymphoma host cells. In terms of processing, phosphorylation at Ser-385 increases the nuclear import efficiency of EBNA1. Post-translationally, phosphorylation at Ser-393 is required for interaction with CSNK2B.

The protein localises to the host nucleus. Its function is as follows. Responsible for the origin of replication (oriP) dependent replication and maintenance of viral episomes during latent infection. EBNA1 dimer interacts with the DS (dyad symmetry) element within the origin of replication oriP and with a host mitotic chromosome to initiate viral DNA replication during latency. EBNA1 binding to DS recruits the host origin recognition complex (ORC). Governs the faithful mitotic segregation of the viral episomes by binding both the FR (family of repeats) element within oriP and the host mitotic chromosomes. Forms a cell cycle-dependent tyrosine-dependent DNA cross-link and single-strand cleavage at oriP required for terminating replication and maintaining viral episomes. Counteracts the stabilization of host p53/TP53 by host USP7, thereby decreasing apoptosis and increasing host cell survival. Induces degradation of host PML through the ubiquitin-proteasome system, which promotes lytic reactivation and may impair the host cell DNA repair. Increases the association of CK2 with PML proteins which increases the phosphorylation of PML proteins by CK2, triggering the polyubiquitylation and degradation of PML. Displays inhibitory effects on a SUMO2-modified complex that includes STUB1, KAP1 and USP7. This inhibitory effect possibly participates to the maintenance of latency linked to PML silencing. The sequence is that of Epstein-Barr nuclear antigen 1 (EBNA1) from Homo sapiens (Human).